The sequence spans 152 residues: Large ribosomal subunit protein uL15 (152 aa).

The disordered stretch occupies residues 1–57 (MTSTLNTLKSNSGSRKKKLRKGRGIAAGQGASCGFGMRGQKSRSGRPTRPGFEGGQM). The segment covering 14-23 (SRKKKLRKGR) has biased composition (basic residues). Positions 25 to 37 (IAAGQGASCGFGM) are enriched in gly residues.

Belongs to the universal ribosomal protein uL15 family. In terms of assembly, part of the 50S ribosomal subunit.

In terms of biological role, binds to the 23S rRNA. The sequence is that of Large ribosomal subunit protein uL15 from Prochlorococcus marinus (strain MIT 9215).